The following is a 609-amino-acid chain: Dihydroxy-acid dehydratase (609 aa).

A Mg(2+)-binding site is contributed by D81. Residue C122 participates in [2Fe-2S] cluster binding. 2 residues coordinate Mg(2+): D123 and K124. N6-carboxylysine is present on K124. C195 is a binding site for [2Fe-2S] cluster. E491 contacts Mg(2+). S517 acts as the Proton acceptor in catalysis.

The protein belongs to the IlvD/Edd family. As to quaternary structure, homodimer. The cofactor is [2Fe-2S] cluster. It depends on Mg(2+) as a cofactor.

The enzyme catalyses (2R)-2,3-dihydroxy-3-methylbutanoate = 3-methyl-2-oxobutanoate + H2O. It carries out the reaction (2R,3R)-2,3-dihydroxy-3-methylpentanoate = (S)-3-methyl-2-oxopentanoate + H2O. It functions in the pathway amino-acid biosynthesis; L-isoleucine biosynthesis; L-isoleucine from 2-oxobutanoate: step 3/4. Its pathway is amino-acid biosynthesis; L-valine biosynthesis; L-valine from pyruvate: step 3/4. Functions in the biosynthesis of branched-chain amino acids. Catalyzes the dehydration of (2R,3R)-2,3-dihydroxy-3-methylpentanoate (2,3-dihydroxy-3-methylvalerate) into 2-oxo-3-methylpentanoate (2-oxo-3-methylvalerate) and of (2R)-2,3-dihydroxy-3-methylbutanoate (2,3-dihydroxyisovalerate) into 2-oxo-3-methylbutanoate (2-oxoisovalerate), the penultimate precursor to L-isoleucine and L-valine, respectively. The polypeptide is Dihydroxy-acid dehydratase (Acinetobacter baumannii (strain AB307-0294)).